We begin with the raw amino-acid sequence, 293 residues long: Urease accessory protein UreD (293 aa).

The protein belongs to the UreD family. In terms of assembly, ureD, UreF and UreG form a complex that acts as a GTP-hydrolysis-dependent molecular chaperone, activating the urease apoprotein by helping to assemble the nickel containing metallocenter of UreC. The UreE protein probably delivers the nickel.

It localises to the cytoplasm. In terms of biological role, required for maturation of urease via the functional incorporation of the urease nickel metallocenter. The polypeptide is Urease accessory protein UreD (Cupriavidus metallidurans (strain ATCC 43123 / DSM 2839 / NBRC 102507 / CH34) (Ralstonia metallidurans)).